Consider the following 889-residue polypeptide: Protein argonaute 15 (889 aa).

Disordered stretches follow at residues 1-26 and 119-150; these read MESH…SRKG and EDAS…RMKR. Residues 122-132 are compositionally biased toward low complexity; the sequence is SSSGRTTTRRS. One can recognise a PAZ domain in the interval 264-379; that stretch reads PVIEFLLFNQ…IPLELCHLVP (116 aa). In terms of domain architecture, Piwi spans 546-853; it reads FVLCVLPERK…AAAQVSQFVR (308 aa). Residues 857–878 are disordered; sequence AASEGSGDGGAPPRPVPELPRL.

It belongs to the argonaute family. Ago subfamily.

Probably involved in the RNA silencing pathway. May bind to short RNAs such as microRNAs (miRNAs) or short interfering RNAs (siRNAs), and represses the translation of mRNAs which are complementary to them. The chain is Protein argonaute 15 (AGO15) from Oryza sativa subsp. japonica (Rice).